Reading from the N-terminus, the 296-residue chain is MSDKQINLVIVTGMSGAGKTVAIQSFEDLGYFTVDNMPPALVPKFLELLERTNETQKVALVVDMRSRRFFKEINSILDHIELNANLKLRILFLDATDSELVSRYKETRRSHPLAADGRVLDGIRRERELLVPLKSMSQHVVNTTDLTPRQLRKVISDQFSSESDQASFRIEVMSFGFKYGLPLDADLVFDVRFLPNPYYQVALREQTGLDQAVFDYVMTHQESEAFYNHLLGLIVPILPAYQKEGKSVLTIAIGCTGGQHRSVAFAHRLAQDLTADWPLHESHRDINRRKETVNRS.

Residue 13-20 (GMSGAGKT) coordinates ATP. Residue 63–66 (DMRS) coordinates GTP.

Belongs to the RapZ-like family.

Its function is as follows. Displays ATPase and GTPase activities. The sequence is that of Nucleotide-binding protein SEQ_0857 from Streptococcus equi subsp. equi (strain 4047).